The sequence spans 222 residues: 2-C-methyl-D-erythritol 4-phosphate cytidylyltransferase (222 aa).

It belongs to the IspD/TarI cytidylyltransferase family. IspD subfamily.

It catalyses the reaction 2-C-methyl-D-erythritol 4-phosphate + CTP + H(+) = 4-CDP-2-C-methyl-D-erythritol + diphosphate. Its pathway is isoprenoid biosynthesis; isopentenyl diphosphate biosynthesis via DXP pathway; isopentenyl diphosphate from 1-deoxy-D-xylulose 5-phosphate: step 2/6. Catalyzes the formation of 4-diphosphocytidyl-2-C-methyl-D-erythritol from CTP and 2-C-methyl-D-erythritol 4-phosphate (MEP). The polypeptide is 2-C-methyl-D-erythritol 4-phosphate cytidylyltransferase (Porphyromonas gingivalis (strain ATCC BAA-308 / W83)).